Reading from the N-terminus, the 87-residue chain is Small ribosomal subunit protein bS20 (87 aa).

Residues 1 to 22 are disordered; that stretch reads MAHHKSAIKRIKQNAKKNARNR.

It belongs to the bacterial ribosomal protein bS20 family.

In terms of biological role, binds directly to 16S ribosomal RNA. In Pelobacter propionicus (strain DSM 2379 / NBRC 103807 / OttBd1), this protein is Small ribosomal subunit protein bS20.